The following is a 179-amino-acid chain: Trypsin inhibitor (179 aa).

A Pyrrolidone carboxylic acid modification is found at Gln1. 2 disulfides stabilise this stretch: Cys40–Cys85 and Cys132–Cys143.

It belongs to the protease inhibitor I3 (leguminous Kunitz-type inhibitor) family. In terms of assembly, heterodimer of an alpha and a beta chain linked by a disulfide bond. Abundant in dry seeds.

It is found in the secreted. In terms of biological role, inhibits trypsin, plasmin, human plasma kallikrein, chymotrypsin and factor XIIa activity. The chain is Trypsin inhibitor from Leucaena leucocephala (White popinac).